Here is a 636-residue protein sequence, read N- to C-terminus: Chaperone protein HtpG (636 aa).

Residues 1 to 345 are a; substrate-binding; the sequence is MSESATANAN…SSDLPLNVSR (345 aa). The b stretch occupies residues 346–562; the sequence is EILQQSKDID…EHDPSGNLAR (217 aa). The segment at 563-636 is c; the sequence is LMKAAGQPMP…NDLMMALSAK (74 aa).

The protein belongs to the heat shock protein 90 family. Homodimer.

It is found in the cytoplasm. In terms of biological role, molecular chaperone. Has ATPase activity. The polypeptide is Chaperone protein HtpG (Dechloromonas aromatica (strain RCB)).